We begin with the raw amino-acid sequence, 259 residues long: Global transcriptional regulator CodY (259 aa).

Positions 1 to 155 (MALLQKTRKI…GATVVGMEIL (155 aa)) are GAF domain. Residues 203–222 (ASKIADRVGITRSVIVNALR) constitute a DNA-binding region (H-T-H motif). Position 215 is a phosphoserine (Ser215).

The protein belongs to the CodY family.

The protein localises to the cytoplasm. Its function is as follows. DNA-binding global transcriptional regulator which is involved in the adaptive response to starvation and acts by directly or indirectly controlling the expression of numerous genes in response to nutrient availability. During rapid exponential growth, CodY is highly active and represses genes whose products allow adaptation to nutrient depletion. In Bacillus licheniformis (strain ATCC 14580 / DSM 13 / JCM 2505 / CCUG 7422 / NBRC 12200 / NCIMB 9375 / NCTC 10341 / NRRL NRS-1264 / Gibson 46), this protein is Global transcriptional regulator CodY.